The chain runs to 404 residues: Epoxide hydrolase 1 (404 aa).

Residues Ile74 to Ala96 form a helical membrane-spanning segment. Residues Pro140–Pro389 enclose the AB hydrolase-1 domain. Asp215 serves as the catalytic Nucleophile. Tyr327 acts as the Proton donor in catalysis. His382 acts as the Proton acceptor in catalysis.

This sequence belongs to the AB hydrolase superfamily. Epoxide hydrolase family.

The protein resides in the membrane. The catalysed reaction is an epoxide + H2O = an ethanediol. It catalyses the reaction 8,9-epoxy-(5Z,11Z,14Z)-eicosatrienoate + H2O = 8,9-dihydroxy-(5Z,11Z,14Z)-eicosatrienoate. It carries out the reaction 11,12-epoxy-(5Z,8Z,14Z)-eicosatrienoate + H2O = 11,12-dihydroxy-(5Z,8Z,14Z)-eicosatrienoate. The enzyme catalyses 14,15-epoxy-(5Z,8Z,11Z)-eicosatrienoate + H2O = 14,15-dihydroxy-(5Z,8Z,11Z)-eicosatrienoate. The catalysed reaction is 12,13-epoxy-(9Z)-octadecenoate + H2O = 12,13-dihydroxy-(9Z)-octadecenoate. It catalyses the reaction 9,10-epoxy-(12Z)-octadecenoate + H2O = 9,10-dihydroxy-(12Z)-octadecenoate. It participates in lipid metabolism. Functionally, catalyzes the hydrolysis of epoxide-containing fatty acids. Active against epoxyeicosatrienoic acids (EETs) including 8,9-epoxy-(5Z,11Z,14Z)-eicosatrienoate (8,9-EET), 11,12-epoxy-(5Z,8Z,14Z)-eicosatrienoate (11,12-EET) and 14,15-epoxy-(5Z,8Z,11Z)-eicosatrienoate (14,15-EET) and the linoleic acid metabolites 12,13-epoxy-(9Z)-octadecenoate (12,13-EpOME) and 9,10-epoxy-(12Z)-octadecenoate (9,10-EpOME). These epoxides function as lipid signaling molecules, the enzyme can deplete the supply of the epoxide signal by transforming them into diol species that are more readily eliminated through excretion. This is Epoxide hydrolase 1 from Caenorhabditis elegans.